The sequence spans 95 residues: Aspartyl/glutamyl-tRNA(Asn/Gln) amidotransferase subunit C (95 aa).

This sequence belongs to the GatC family. In terms of assembly, heterotrimer of A, B and C subunits.

The enzyme catalyses L-glutamyl-tRNA(Gln) + L-glutamine + ATP + H2O = L-glutaminyl-tRNA(Gln) + L-glutamate + ADP + phosphate + H(+). The catalysed reaction is L-aspartyl-tRNA(Asn) + L-glutamine + ATP + H2O = L-asparaginyl-tRNA(Asn) + L-glutamate + ADP + phosphate + 2 H(+). Functionally, allows the formation of correctly charged Asn-tRNA(Asn) or Gln-tRNA(Gln) through the transamidation of misacylated Asp-tRNA(Asn) or Glu-tRNA(Gln) in organisms which lack either or both of asparaginyl-tRNA or glutaminyl-tRNA synthetases. The reaction takes place in the presence of glutamine and ATP through an activated phospho-Asp-tRNA(Asn) or phospho-Glu-tRNA(Gln). The polypeptide is Aspartyl/glutamyl-tRNA(Asn/Gln) amidotransferase subunit C (Rhodopseudomonas palustris (strain ATCC BAA-98 / CGA009)).